A 107-amino-acid polypeptide reads, in one-letter code: ATP synthase peripheral stalk subunit F6, mitochondrial (107 aa).

The transit peptide at 1–31 (MILQRLFRFSVIRSAVSVYLRRNIGVTAVAF) directs the protein to the mitochondrion. An N6-acetyllysine mark is found at Lys40, Lys45, and Lys78. N6-acetyllysine; alternate is present on residues Lys93 and Lys98. N6-succinyllysine; alternate is present on residues Lys93 and Lys98. Lys104 is subject to N6-acetyllysine.

This sequence belongs to the eukaryotic ATPase subunit F6 family. In terms of assembly, component of the ATP synthase complex composed at least of ATP5F1A/subunit alpha, ATP5F1B/subunit beta, ATP5MC1/subunit c (homooctomer), MT-ATP6/subunit a, MT-ATP8/subunit 8, ATP5ME/subunit e, ATP5MF/subunit f, ATP5MG/subunit g, ATP5MK/subunit k, ATP5MJ/subunit j, ATP5F1C/subunit gamma, ATP5F1D/subunit delta, ATP5F1E/subunit epsilon, ATP5PF/subunit F6, ATP5PB/subunit b, ATP5PD/subunit d, ATP5PO/subunit OSCP. ATP synthase complex consists of a soluble F(1) head domain (subunits alpha(3) and beta(3)) - the catalytic core - and a membrane F(0) domain - the membrane proton channel (subunits c, a, 8, e, f, g, k and j). These two domains are linked by a central stalk (subunits gamma, delta, and epsilon) rotating inside the F1 region and a stationary peripheral stalk (subunits F6, b, d, and OSCP).

The protein resides in the mitochondrion. The protein localises to the mitochondrion inner membrane. In terms of biological role, subunit F6, of the mitochondrial membrane ATP synthase complex (F(1)F(0) ATP synthase or Complex V) that produces ATP from ADP in the presence of a proton gradient across the membrane which is generated by electron transport complexes of the respiratory chain. ATP synthase complex consist of a soluble F(1) head domain - the catalytic core - and a membrane F(1) domain - the membrane proton channel. These two domains are linked by a central stalk rotating inside the F(1) region and a stationary peripheral stalk. During catalysis, ATP synthesis in the catalytic domain of F(1) is coupled via a rotary mechanism of the central stalk subunits to proton translocation. In vivo, can only synthesize ATP although its ATP hydrolase activity can be activated artificially in vitro. Part of the complex F(0) domain. Part of the complex F(0) domain and the peripheric stalk, which acts as a stator to hold the catalytic alpha(3)beta(3) subcomplex and subunit a/ATP6 static relative to the rotary elements. This Pongo abelii (Sumatran orangutan) protein is ATP synthase peripheral stalk subunit F6, mitochondrial.